The chain runs to 364 residues: Nucleoporin SEH1 (364 aa).

WD repeat units lie at residues Asp-10–Cys-49, Thr-55–Lys-96, Asp-111–Gln-152, Ser-160–Ala-210, Thr-217–Ala-258, and Ser-276–Cys-315.

The protein belongs to the WD repeat SEC13 family. Component of the Nup107-160 subcomplex of the nuclear pore complex (NPC). The Nup107-160 subcomplex includes NUP160, NUP133, NUP107, NUP98, NUP85, NUP43, NUP37, SEH1 and SEC13. Component of the GATOR2 subcomplex, composed of MIOS, SEC13, SEH1L, WDR24 and WDR59. The GATOR2 complex interacts with CASTOR1 and CASTOR2; the interaction is negatively regulated by arginine. The GATOR2 complex interacts with SESN1, SESN2 and SESN3; the interaction is negatively regulated by amino acids.

Its subcellular location is the chromosome. It localises to the centromere. The protein resides in the kinetochore. The protein localises to the nucleus. It is found in the nuclear pore complex. Its subcellular location is the lysosome membrane. Its activity is regulated as follows. The GATOR2 complex is negatively regulated by the upstream amino acid sensors CASTOR1 and SESN2, which sequester the GATOR2 complex in absence of amino acids. In the presence of abundant amino acids, GATOR2 is released from CASTOR1 and SESN2 and activated. Functionally, component of the Nup107-160 subcomplex of the nuclear pore complex (NPC). The Nup107-160 subcomplex is required for the assembly of a functional NPC. The Nup107-160 subcomplex is also required for normal kinetochore microtubule attachment, mitotic progression and chromosome segregation. This subunit plays a role in recruitment of the Nup107-160 subcomplex to the kinetochore. In terms of biological role, as a component of the GATOR2 complex, functions as an activator of the amino acid-sensing branch of the mTORC1 signaling pathway. The GATOR2 complex indirectly activates mTORC1 through the inhibition of the GATOR1 subcomplex. GATOR2 probably acts as an E3 ubiquitin-protein ligase toward GATOR1. In the presence of abundant amino acids, the GATOR2 complex mediates ubiquitination of the NPRL2 core component of the GATOR1 complex, leading to GATOR1 inactivation. In the absence of amino acids, GATOR2 is inhibited, activating the GATOR1 complex. The polypeptide is Nucleoporin SEH1 (seh1l) (Danio rerio (Zebrafish)).